Consider the following 444-residue polypeptide: Putative zinc metalloprotease XF_1047 (444 aa).

Residue His-22 participates in Zn(2+) binding. Glu-23 is a catalytic residue. His-26 is a binding site for Zn(2+). A helical transmembrane segment spans residues 98-120 (IAIVAAGPLANLLLCMLLLWVLF). The PDZ domain occupies 192–276 (TLELSKLKQP…DGHPGMIEIR (85 aa)). 2 consecutive transmembrane segments (helical) span residues 371–393 (VGWF…LFPI) and 418–440 (AMAA…AFYN).

Belongs to the peptidase M50B family. Zn(2+) serves as cofactor.

It localises to the cell inner membrane. This Xylella fastidiosa (strain 9a5c) protein is Putative zinc metalloprotease XF_1047.